The primary structure comprises 132 residues: Putative RNase AF_0947 (132 aa).

Catalysis depends on residues Arg-91 and His-96. The RX(4)HXY motif motif lies at 91-98 (RNAIAHHY). Tyr-98 is modified (O-di-AMP-tyrosine).

Belongs to the HepT RNase toxin family. In terms of assembly, homodimer, probably forms a complex with cognate antitoxin AF_0948. In terms of processing, modified by cognate antitoxin AF_0948; probably at least 2 successive AMPylation events occur on Tyr-98.

In terms of biological role, probable toxic component of a putative type VII toxin-antitoxin (TA) system, probably an RNase. Probably neutralized by cognate antitoxin AF_0948. Neutralization may be due to AMPylation by AF_0948. The chain is Putative RNase AF_0947 from Archaeoglobus fulgidus (strain ATCC 49558 / DSM 4304 / JCM 9628 / NBRC 100126 / VC-16).